The following is a 425-amino-acid chain: Kynureninase (425 aa).

Pyridoxal 5'-phosphate is bound by residues Leu105, Thr106, 133–136 (FPSD), Asp218, His221, and Tyr243. Lys244 carries the post-translational modification N6-(pyridoxal phosphate)lysine. Pyridoxal 5'-phosphate contacts are provided by Trp274 and Asn302.

Belongs to the kynureninase family. Homodimer. It depends on pyridoxal 5'-phosphate as a cofactor.

It catalyses the reaction L-kynurenine + H2O = anthranilate + L-alanine + H(+). The enzyme catalyses 3-hydroxy-L-kynurenine + H2O = 3-hydroxyanthranilate + L-alanine + H(+). It functions in the pathway amino-acid degradation; L-kynurenine degradation; L-alanine and anthranilate from L-kynurenine: step 1/1. It participates in cofactor biosynthesis; NAD(+) biosynthesis; quinolinate from L-kynurenine: step 2/3. Its function is as follows. Catalyzes the cleavage of L-kynurenine (L-Kyn) and L-3-hydroxykynurenine (L-3OHKyn) into anthranilic acid (AA) and 3-hydroxyanthranilic acid (3-OHAA), respectively. In Flavobacterium psychrophilum (strain ATCC 49511 / DSM 21280 / CIP 103535 / JIP02/86), this protein is Kynureninase.